A 428-amino-acid polypeptide reads, in one-letter code: Histidine--tRNA ligase (428 aa).

It belongs to the class-II aminoacyl-tRNA synthetase family. As to quaternary structure, homodimer.

The protein resides in the cytoplasm. It carries out the reaction tRNA(His) + L-histidine + ATP = L-histidyl-tRNA(His) + AMP + diphosphate + H(+). The chain is Histidine--tRNA ligase from Ectopseudomonas mendocina (strain ymp) (Pseudomonas mendocina).